We begin with the raw amino-acid sequence, 440 residues long: Serine hydroxymethyltransferase (440 aa).

(6S)-5,6,7,8-tetrahydrofolate contacts are provided by residues Leu119 and 123–125 (GHL). Lys228 carries the N6-(pyridoxal phosphate)lysine modification. 370–372 (SPF) lines the (6S)-5,6,7,8-tetrahydrofolate pocket.

Belongs to the SHMT family. Homodimer. Pyridoxal 5'-phosphate serves as cofactor.

Its subcellular location is the cytoplasm. The catalysed reaction is (6R)-5,10-methylene-5,6,7,8-tetrahydrofolate + glycine + H2O = (6S)-5,6,7,8-tetrahydrofolate + L-serine. The protein operates within one-carbon metabolism; tetrahydrofolate interconversion. It functions in the pathway amino-acid biosynthesis; glycine biosynthesis; glycine from L-serine: step 1/1. Its function is as follows. Catalyzes the reversible interconversion of serine and glycine with tetrahydrofolate (THF) serving as the one-carbon carrier. This reaction serves as the major source of one-carbon groups required for the biosynthesis of purines, thymidylate, methionine, and other important biomolecules. Also exhibits THF-independent aldolase activity toward beta-hydroxyamino acids, producing glycine and aldehydes, via a retro-aldol mechanism. The protein is Serine hydroxymethyltransferase of Chlorobaculum parvum (strain DSM 263 / NCIMB 8327) (Chlorobium vibrioforme subsp. thiosulfatophilum).